The chain runs to 863 residues: Importin subunit beta-1 (863 aa).

19 HEAT repeats span residues 2–31, 33–62, 85–124, 129–159, 170–201, 212–248, 253–299, 314–360, 364–392, 399–439, 449–481, 496–530, 536–586, 592–630, 635–671, 677–715, 720–767, 778–815, and 822–861; these read NAGEFLAQTLSPDANVRLNAEKQLENAART, FAQYMVLLAQELANDNSMPYIRMAAGLALK, VEIKQQVKSLALQTLGSSEHQAGQSAAQLVAAIAAYELAT, DLMVTLVANVGEGQPSALKQHSLQTIGYICE, SNAILTAVVAGARKEEPDAAVRLAALGALYDS, EYERNYIMQVVCEATQSPEASIQTAAFGCLVKIMHLY, PFYM…EIQE, FARA…QVVG, VNPVLAFVEQNIQNPDWHQREAAVMAFGS, VAML…SSFV, LSPMVSALLQGLTDNPRIVANCCWAFMNLVCHF, YEAIIGSLLHVTDQKGNENNSRTSGYETLGTLITF, LPMI…IIRR, RTSSDQIMNLLLQTMQTAPKQSVVHEDVLLAIGAMMNSL, EVYVPSFVPFLSSALSNEQEYQLCSVAVGLVGDLARA, LPYCDDFMTRLVQDLQSSVLDRNVKPAILSCFSDIALAI, QTYL…ITQA, QPYVHSMFTLLNMITADPECSESLTRAALGLLGDLAES, and KSYFAADWVAALLNSGKTKISSQQTKDLARWATEQVKRQA. One can recognise an Importin N-terminal domain in the interval 21 to 101; sequence AEKQLENAAR…KSLALQTLGS (81 aa).

Belongs to the importin beta family. Importin beta-1 subfamily. Forms a complex with an importin alpha subunit. Interacts with Ran; interacts specifically with the GTP-bound form of Ran (GTP-Ran), protecting it from GTP hydrolysis and nucleotide exchange. Interacts with nucleoporins.

Its subcellular location is the cytoplasm. It is found in the nucleus envelope. The protein resides in the nucleus. The protein localises to the nuclear pore complex. Its function is as follows. Importin beta subunit that functions in nuclear protein import through association with the importin alpha subunit, which binds to the clasical nuclear localization signal (cNLS) in cargo substrates. Docking of the importin/substrate complex to the nuclear pore complex (NPC) is mediated by importin beta through binding to nucleoporin FxFG repeats and the complex is subsequently translocated through the pore by an energy requiring, Ran-dependent mechanism. At the nucleoplasmic side of the NPC, GTP-Ran binds to importin beta and the three components separate, leading to release of the cargo. Importin alpha and beta are re-exported from the nucleus to the cytoplasm where GTP hydrolysis releases Ran from importin beta. The directionality of nuclear import is thought to be conferred by an asymmetric distribution of the GTP- and GDP-bound forms of Ran between the cytoplasm and nucleus. This is Importin subunit beta-1 from Schizosaccharomyces pombe (strain 972 / ATCC 24843) (Fission yeast).